The following is a 1116-amino-acid chain: Phosphatidylinositol 4-kinase beta 2 (1116 aa).

One can recognise a PIK helical domain in the interval 1–143; the sequence is MQMAQFLSLV…SRIQEKCQIA (143 aa). 8 consecutive repeat copies span residues 210–229, 242–261, 264–283, 286–304, 307–326, 329–348, 351–370, and 378–396. The 11 X 20 AA approximate repeats (PPC) stretch occupies residues 210–507; sequence ADDNKIFKRL…FRDRDRSVED (298 aa). Basic and acidic residues predominate over residues 394–404; it reads EKRNGNERNET. The disordered stretch occupies residues 394–417; it reads EKRNGNERNETDETVYTDETSGED. The span at 405-415 shows a compositional bias: acidic residues; it reads DETVYTDETSG. The stretch at 418-436 is repeat 9; sequence NGREGFFKKLFKEKFEDKP. Phosphoserine occurs at positions 447 and 452. Tandem repeats lie at residues 452-470 and 488-507. 2 disordered regions span residues 515–540 and 794–813; these read KYKE…LPNN and GEAP…SDAQ. A PI3K/PI4K catalytic domain is found at 830-1101; that stretch reads EFWEGKRLRI…LISSSLDAWR (272 aa). A G-loop region spans residues 836–842; that stretch reads RLRIRKD. The interval 964 to 972 is catalytic loop; the sequence is QIKDRHNGN. The interval 983-1007 is activation loop; that stretch reads HIDFGFMLSNSPGGVNFESAPFKLT.

The protein belongs to the PI3/PI4-kinase family. Type III PI4K subfamily.

The protein localises to the cell membrane. It localises to the golgi apparatus. Its subcellular location is the trans-Golgi network. The protein resides in the cytoplasmic vesicle membrane. It carries out the reaction a 1,2-diacyl-sn-glycero-3-phospho-(1D-myo-inositol) + ATP = a 1,2-diacyl-sn-glycero-3-phospho-(1D-myo-inositol 4-phosphate) + ADP + H(+). Acts on phosphatidylinositol (PtdIns) in the first committed step in the production of the second messenger inositol-1,4,5-trisphosphate. Necessary for proper organization of the trans-Golgi network (TGN) and post-Golgi secretion in root hairs. Together with PI4KB1, required during polarized root hair expansion and pollen tube elongation. Functions redundantly with PI4KB1 upstream of the cold response phosphoinositide-dependent phospholipase C (PI-PLC) pathway. The protein is Phosphatidylinositol 4-kinase beta 2 (PI4KB2) of Arabidopsis thaliana (Mouse-ear cress).